We begin with the raw amino-acid sequence, 83 residues long: MDFQALLSQLPQETLFVLLAYGAVLGTYLIAVPLALYAWINLRWYRMSKFERLGVYGLVFLFFPGMIVFAPFINLRLSGQGEV.

Transmembrane regions (helical) follow at residues Leu15–Ala35 and Leu53–Ile73.

It belongs to the complex I NdhL subunit family. As to quaternary structure, NDH-1 can be composed of about 15 different subunits; different subcomplexes with different compositions have been identified which probably have different functions.

The protein localises to the cellular thylakoid membrane. It carries out the reaction a plastoquinone + NADH + (n+1) H(+)(in) = a plastoquinol + NAD(+) + n H(+)(out). It catalyses the reaction a plastoquinone + NADPH + (n+1) H(+)(in) = a plastoquinol + NADP(+) + n H(+)(out). Functionally, NDH-1 shuttles electrons from an unknown electron donor, via FMN and iron-sulfur (Fe-S) centers, to quinones in the respiratory and/or the photosynthetic chain. The immediate electron acceptor for the enzyme in this species is believed to be plastoquinone. Couples the redox reaction to proton translocation, and thus conserves the redox energy in a proton gradient. Cyanobacterial NDH-1 also plays a role in inorganic carbon-concentration. The protein is NAD(P)H-quinone oxidoreductase subunit L of Synechococcus sp. (strain CC9902).